A 164-amino-acid chain; its full sequence is MITRGRVWKFGDNISTDAITPGRYNLTKDPNELAKIAFIEERPEFSKEVKPGDVVVGGKNFGIGSSRESAALALKAAGVGGVIAKSFGRIFFRNAVNLGLPLLIGNTDPLLDGEIVEVNWRSGEVKKEDGEVLKFKPLDSFLLAIVEEGGIIEYIRRRGDLWIQ.

The protein belongs to the LeuD family. LeuD type 2 subfamily. In terms of assembly, heterodimer of LeuC and LeuD.

It carries out the reaction (2R,3S)-3-isopropylmalate = (2S)-2-isopropylmalate. It functions in the pathway amino-acid biosynthesis; L-leucine biosynthesis; L-leucine from 3-methyl-2-oxobutanoate: step 2/4. Its function is as follows. Catalyzes the isomerization between 2-isopropylmalate and 3-isopropylmalate, via the formation of 2-isopropylmaleate. The polypeptide is 3-isopropylmalate dehydratase small subunit 2 (leuD2) (Pyrococcus furiosus (strain ATCC 43587 / DSM 3638 / JCM 8422 / Vc1)).